A 305-amino-acid polypeptide reads, in one-letter code: Glutaminase (305 aa).

Residues Ser61, Asn113, Glu158, Asn165, Tyr189, Tyr241, and Val259 each coordinate substrate.

Belongs to the glutaminase family. As to quaternary structure, homotetramer.

The enzyme catalyses L-glutamine + H2O = L-glutamate + NH4(+). The sequence is that of Glutaminase from Alkaliphilus oremlandii (strain OhILAs) (Clostridium oremlandii (strain OhILAs)).